We begin with the raw amino-acid sequence, 584 residues long: UvrABC system protein C (584 aa).

A GIY-YIG domain is found at 12–89 (NKPGCYLFLN…IKKYRPKYNV (78 aa)). The UVR domain occupies 194–229 (NQVKQTLVKQMQKASDNLQFEQAKRIKDQITSLDFI).

The protein belongs to the UvrC family. In terms of assembly, interacts with UvrB in an incision complex.

It is found in the cytoplasm. Its function is as follows. The UvrABC repair system catalyzes the recognition and processing of DNA lesions. UvrC both incises the 5' and 3' sides of the lesion. The N-terminal half is responsible for the 3' incision and the C-terminal half is responsible for the 5' incision. The protein is UvrABC system protein C of Mycoplasma capricolum subsp. capricolum (strain California kid / ATCC 27343 / NCTC 10154).